We begin with the raw amino-acid sequence, 423 residues long: Serine hydroxymethyltransferase (423 aa).

121-123 serves as a coordination point for (6S)-5,6,7,8-tetrahydrofolate; the sequence is GHI. K227 carries the post-translational modification N6-(pyridoxal phosphate)lysine. E242 is a (6S)-5,6,7,8-tetrahydrofolate binding site.

This sequence belongs to the SHMT family. In terms of assembly, homodimer. It depends on pyridoxal 5'-phosphate as a cofactor.

The protein localises to the cytoplasm. The enzyme catalyses 5,10-methylenetetrahydromethanopterin + glycine + H2O = 5,6,7,8-tetrahydromethanopterin + L-serine. It participates in amino-acid biosynthesis; glycine biosynthesis; glycine from L-serine: step 1/1. Functionally, catalyzes the reversible interconversion of serine and glycine with tetrahydromethanopterin (H4MPT) serving as the one-carbon carrier. Cannot use tetrahydrofolate (THF or H4PteGlu) instead of H4MPT as the pteridine substrate. Also probably exhibits a pteridine-independent aldolase activity toward beta-hydroxyamino acids, producing glycine and aldehydes, via a retro-aldol mechanism. The sequence is that of Serine hydroxymethyltransferase from Methanothermobacter thermautotrophicus (strain ATCC 29096 / DSM 1053 / JCM 10044 / NBRC 100330 / Delta H) (Methanobacterium thermoautotrophicum).